Here is a 323-residue protein sequence, read N- to C-terminus: tRNA-dihydrouridine(20/20a) synthase (323 aa).

FMN is bound by residues 14-16 (PML) and Q66. The active-site Proton donor is C96. FMN is bound by residues K135, H166, 206 to 208 (NGG), and 228 to 229 (GR).

Belongs to the Dus family. DusA subfamily. It depends on FMN as a cofactor.

The catalysed reaction is 5,6-dihydrouridine(20) in tRNA + NADP(+) = uridine(20) in tRNA + NADPH + H(+). It carries out the reaction 5,6-dihydrouridine(20) in tRNA + NAD(+) = uridine(20) in tRNA + NADH + H(+). The enzyme catalyses 5,6-dihydrouridine(20a) in tRNA + NADP(+) = uridine(20a) in tRNA + NADPH + H(+). It catalyses the reaction 5,6-dihydrouridine(20a) in tRNA + NAD(+) = uridine(20a) in tRNA + NADH + H(+). Catalyzes the synthesis of 5,6-dihydrouridine (D), a modified base found in the D-loop of most tRNAs, via the reduction of the C5-C6 double bond in target uridines. Specifically modifies U20 and U20a in tRNAs. This chain is tRNA-dihydrouridine(20/20a) synthase, found in Haemophilus ducreyi (strain 35000HP / ATCC 700724).